Here is a 309-residue protein sequence, read N- to C-terminus: MPGNSRRRGAVRKSGTNKGTTVGSGGQRRRALEGRGPTPPAYLRPNHPAAKRNQSSPHRPVKRTDETETVLGRNPVLECLRAGVPATALYVALGTEVDKRLTESVMRAADVGVAILEVPRTYLDRITNNHLHQGIALQVPPYHYVHSDDLLAAATDSPPALLVALDNISDPRNLGAIVRSVAAFSGHGILIPQRRSASVTAVAWRTSAGAAARIPVARATNLTRALKVWADQGLRVIGLDHDGDTALDDLDGTDPLAVVVGSEGKGLSRLVRHSCDEVVSIPMAGQVESLNASVAVGVVLAEIARQRRL.

Residues 1–11 show a composition bias toward basic residues; it reads MPGNSRRRGAV. The disordered stretch occupies residues 1–69; it reads MPGNSRRRGA…PVKRTDETET (69 aa). Positions 261, 281, and 290 each coordinate S-adenosyl-L-methionine.

Belongs to the class IV-like SAM-binding methyltransferase superfamily. RNA methyltransferase TrmH family.

This is an uncharacterized protein from Mycobacterium leprae (strain TN).